A 399-amino-acid chain; its full sequence is MARAKFERTKDHVNIGTIGHVDHGKTTLTAAITMTLAELGGAKARKYEDIDAAPEEKARGITINTAHVEYETDSRHYAHVDCPGHADYVKNMITGAAQMDGAILVVSAADGPMPQTREHILLAKQVGVPKLVVFLNKKDMVDDEELLELVELEVRELLSDYDFPGDDIPIVAGSALKAIEGEKEYKDAILELMKAVDDYIDTPEREVDKPFLMAVEDVFSITGRGTVATGRIERGKVKVGEEISIVGIKDTRKATVTGVEMFQKTLEEGMAGDNVGLLLRGIQKEDIERGMVLAKPGSITPHTEFEGEVYVLKKEEGGRHTPFFANYRPQFYVRTTDVTGTIKSYTADDGSAVEMVMPGDRIKMTVELINPIAIEQGMRFAIREGGRTIGAGVVSKILK.

The region spanning 10-204 (KDHVNIGTIG…AVDDYIDTPE (195 aa)) is the tr-type G domain. The G1 stretch occupies residues 19–26 (GHVDHGKT). 19–26 (GHVDHGKT) contacts GTP. Residue T26 participates in Mg(2+) binding. The segment at 60–64 (GITIN) is G2. The interval 81–84 (DCPG) is G3. GTP is bound by residues 81 to 85 (DCPGH) and 136 to 139 (NKKD). Positions 136–139 (NKKD) are G4. The G5 stretch occupies residues 174–176 (SAL).

It belongs to the TRAFAC class translation factor GTPase superfamily. Classic translation factor GTPase family. EF-Tu/EF-1A subfamily. As to quaternary structure, monomer.

It is found in the cytoplasm. It carries out the reaction GTP + H2O = GDP + phosphate + H(+). Functionally, GTP hydrolase that promotes the GTP-dependent binding of aminoacyl-tRNA to the A-site of ribosomes during protein biosynthesis. The protein is Elongation factor Tu of Synechocystis sp. (strain ATCC 27184 / PCC 6803 / Kazusa).